A 353-amino-acid chain; its full sequence is UDP-N-acetylglucosamine--N-acetylmuramyl-(pentapeptide) pyrophosphoryl-undecaprenol N-acetylglucosamine transferase (353 aa).

UDP-N-acetyl-alpha-D-glucosamine contacts are provided by residues 10 to 12 (TGG), N124, S183, and Q283.

It belongs to the glycosyltransferase 28 family. MurG subfamily.

Its subcellular location is the cell inner membrane. The enzyme catalyses di-trans,octa-cis-undecaprenyl diphospho-N-acetyl-alpha-D-muramoyl-L-alanyl-D-glutamyl-meso-2,6-diaminopimeloyl-D-alanyl-D-alanine + UDP-N-acetyl-alpha-D-glucosamine = di-trans,octa-cis-undecaprenyl diphospho-[N-acetyl-alpha-D-glucosaminyl-(1-&gt;4)]-N-acetyl-alpha-D-muramoyl-L-alanyl-D-glutamyl-meso-2,6-diaminopimeloyl-D-alanyl-D-alanine + UDP + H(+). The protein operates within cell wall biogenesis; peptidoglycan biosynthesis. Its function is as follows. Cell wall formation. Catalyzes the transfer of a GlcNAc subunit on undecaprenyl-pyrophosphoryl-MurNAc-pentapeptide (lipid intermediate I) to form undecaprenyl-pyrophosphoryl-MurNAc-(pentapeptide)GlcNAc (lipid intermediate II). This chain is UDP-N-acetylglucosamine--N-acetylmuramyl-(pentapeptide) pyrophosphoryl-undecaprenol N-acetylglucosamine transferase, found in Helicobacter acinonychis (strain Sheeba).